Reading from the N-terminus, the 275-residue chain is Elongation factor Ts (275 aa).

The interval 76-79 (TDFV) is involved in Mg(2+) ion dislocation from EF-Tu.

The protein belongs to the EF-Ts family.

The protein localises to the cytoplasm. In terms of biological role, associates with the EF-Tu.GDP complex and induces the exchange of GDP to GTP. It remains bound to the aminoacyl-tRNA.EF-Tu.GTP complex up to the GTP hydrolysis stage on the ribosome. This Salinispora tropica (strain ATCC BAA-916 / DSM 44818 / JCM 13857 / NBRC 105044 / CNB-440) protein is Elongation factor Ts.